Reading from the N-terminus, the 1235-residue chain is Ubiquitin carboxyl-terminal hydrolase 40 (1235 aa).

A USP domain is found at 41 to 482 (SGIRNQGGTC…SAYMLFYRKA (442 aa)). The Nucleophile role is filled by Cys50. The Proton acceptor role is filled by His305.

This sequence belongs to the peptidase C19 family.

The enzyme catalyses Thiol-dependent hydrolysis of ester, thioester, amide, peptide and isopeptide bonds formed by the C-terminal Gly of ubiquitin (a 76-residue protein attached to proteins as an intracellular targeting signal).. The chain is Ubiquitin carboxyl-terminal hydrolase 40 (Usp40) from Mus musculus (Mouse).